A 234-amino-acid polypeptide reads, in one-letter code: Glucosamine-6-phosphate deaminase (234 aa).

Catalysis depends on Asp-62, which acts as the Proton acceptor; for enolization step. Residue Asn-128 is the For ring-opening step of the active site. The active-site Proton acceptor; for ring-opening step is His-130. The active-site For ring-opening step is Glu-135.

The protein belongs to the glucosamine/galactosamine-6-phosphate isomerase family. NagB subfamily.

The enzyme catalyses alpha-D-glucosamine 6-phosphate + H2O = beta-D-fructose 6-phosphate + NH4(+). The protein operates within amino-sugar metabolism; N-acetylneuraminate degradation; D-fructose 6-phosphate from N-acetylneuraminate: step 5/5. Functionally, catalyzes the reversible isomerization-deamination of glucosamine 6-phosphate (GlcN6P) to form fructose 6-phosphate (Fru6P) and ammonium ion. This Streptococcus pyogenes serotype M49 (strain NZ131) protein is Glucosamine-6-phosphate deaminase.